A 149-amino-acid polypeptide reads, in one-letter code: MAAYLLAVAILFCIQGWPSGTVQGQAMPFMEVFERSVCQTREMLVSILDEHPDEVAHLFRPSCVTVLRCGGCCTDESLMCTATGKRSVGREIMRVDPRKETSKIEVMQFTEHTECECRPRSGRVNSGKRKRNPEEGGAESQVPLGLTSF.

A signal peptide spans 1–24 (MAAYLLAVAILFCIQGWPSGTVQG). Glutamine 25 is subject to Pyrrolidone carboxylic acid. Disulfide bonds link cysteine 38-cysteine 80, cysteine 69-cysteine 115, and cysteine 73-cysteine 117. The segment at 118–149 (RPRSGRVNSGKRKRNPEEGGAESQVPLGLTSF) is disordered.

This sequence belongs to the PDGF/VEGF growth factor family. Snake venom VEGF subfamily. In terms of assembly, homodimer; disulfide-linked. Interacts with VEGF receptor-1 (FLT1) with a high affinity, whereas it binds to VEGF receptor-2 (KDR) with a low affinity. Does not bind VEGF receptor-3 (FLT4). As to expression, expressed by the venom gland.

It is found in the secreted. Snake venom VEGFs that may contribute to venom dispersion and prey subjugation by inducing vascular permeability and hypotension. This protein induces an increase in capillary permeability after intradermal injection, as well as a drastic hypotensive effect after intravenous injection. The hypotension is mediated by nitric oxide (NO), which is produced by VEGF-activated endothelium NO synthase. Also induces angiogenesis in vitro. Like other crotalid VEGFs, this protein interacts with VEGF receptor-1 (FLT1) with a high affinity, whereas it binds to VEGF receptor-2 (KDR) with a low affinity. The sequence is that of Snake venom vascular endothelial growth factor toxin 2 from Sistrurus catenatus edwardsii (Desert massasauga).